A 603-amino-acid chain; its full sequence is Phosphomethylpyrimidine synthase (603 aa).

Substrate contacts are provided by residues Asn-224, Met-253, Tyr-282, His-318, Ser-338 to Gly-340, Asp-379 to Arg-382, and Glu-418. His-422 is a Zn(2+) binding site. Tyr-445 contributes to the substrate binding site. His-486 serves as a coordination point for Zn(2+). [4Fe-4S] cluster-binding residues include Cys-566, Cys-569, and Cys-574.

The protein belongs to the ThiC family. As to quaternary structure, homodimer. [4Fe-4S] cluster is required as a cofactor.

It carries out the reaction 5-amino-1-(5-phospho-beta-D-ribosyl)imidazole + S-adenosyl-L-methionine = 4-amino-2-methyl-5-(phosphooxymethyl)pyrimidine + CO + 5'-deoxyadenosine + formate + L-methionine + 3 H(+). It participates in cofactor biosynthesis; thiamine diphosphate biosynthesis. Its function is as follows. Catalyzes the synthesis of the hydroxymethylpyrimidine phosphate (HMP-P) moiety of thiamine from aminoimidazole ribotide (AIR) in a radical S-adenosyl-L-methionine (SAM)-dependent reaction. This chain is Phosphomethylpyrimidine synthase, found in Xylella fastidiosa (strain Temecula1 / ATCC 700964).